An 86-amino-acid polypeptide reads, in one-letter code: uncharacterized protein (86 aa).

A signal peptide spans 1–22 (MKTINTVVAAMALSTLSFGVFA).

It belongs to the BhsA/McbA family.

It localises to the periplasm. This is an uncharacterized protein from Escherichia coli O6:H1 (strain CFT073 / ATCC 700928 / UPEC).